The sequence spans 535 residues: Phosphoenolpyruvate carboxykinase (ATP) (535 aa).

Substrate is bound by residues Arg-59, Tyr-201, and Lys-207. Residues Lys-207, His-226, and 243-251 (GLSGTGKTT) each bind ATP. Residues Lys-207 and His-226 each contribute to the Mn(2+) site. Asp-264 is a Mn(2+) binding site. Residues Glu-292, Arg-328, 444–445 (RI), and Thr-450 contribute to the ATP site. Position 328 (Arg-328) interacts with substrate.

It belongs to the phosphoenolpyruvate carboxykinase (ATP) family. Requires Mn(2+) as cofactor.

It is found in the cytoplasm. The catalysed reaction is oxaloacetate + ATP = phosphoenolpyruvate + ADP + CO2. Its pathway is carbohydrate biosynthesis; gluconeogenesis. Functionally, involved in the gluconeogenesis. Catalyzes the conversion of oxaloacetate (OAA) to phosphoenolpyruvate (PEP) through direct phosphoryl transfer between the nucleoside triphosphate and OAA. The chain is Phosphoenolpyruvate carboxykinase (ATP) from Porphyromonas gingivalis (strain ATCC BAA-308 / W83).